A 3036-amino-acid polypeptide reads, in one-letter code: DmX-like protein 2 (3036 aa).

WD repeat units lie at residues phenylalanine 108–glutamate 145, lysine 167–isoleucine 207, and alanine 230–leucine 278. The residue at position 326 (serine 326) is a Phosphoserine. Residues lysine 417–leucine 480 form a disordered region. Over residues glutamate 422–serine 434 the composition is skewed to acidic residues. The segment covering glutamine 435–serine 473 has biased composition (basic and acidic residues). Serine 473 carries the post-translational modification Phosphoserine. The WD 4 repeat unit spans residues aspartate 492 to proline 532. Serine 588 bears the Phosphoserine mark. WD repeat units follow at residues histidine 595 to phenylalanine 634, leucine 751 to leucine 803, and glutamine 878 to cysteine 920. The tract at residues serine 932–serine 959 is disordered. A phosphoserine mark is found at serine 944 and serine 945. The span at serine 949–serine 959 shows a compositional bias: low complexity. A WD 8 repeat occupies leucine 1000–cysteine 1037. Serine 1140, serine 1143, and serine 1151 each carry phosphoserine. 2 WD repeats span residues proline 1163–glutamine 1204 and glycine 1244–glycine 1281. Phosphoserine occurs at positions 1287 and 1400. A Phosphothreonine modification is found at threonine 1417. At serine 1857 the chain carries Phosphoserine. Positions isoleucine 1927–serine 1936 are enriched in basic and acidic residues. Residues isoleucine 1927–tryptophan 1952 are disordered. Position 1984 is a phosphoserine (serine 1984). The disordered stretch occupies residues lysine 1999–threonine 2033. A compositionally biased stretch (basic and acidic residues) spans threonine 2001–alanine 2014. Position 2022 is a phosphothreonine (threonine 2022). Positions glutamine 2024–threonine 2033 are enriched in acidic residues. A coiled-coil region spans residues glycine 2122–aspartate 2153. Serine 2399 and serine 2640 each carry phosphoserine. WD repeat units lie at residues arginine 2761–cysteine 2800, alanine 2804–lysine 2843, cysteine 2850–leucine 2892, cysteine 2898–threonine 2937, alanine 2940–serine 2979, and asparagine 2992–asparagine 3030.

In terms of assembly, interacts with MADD and RAB3GAP.

It localises to the cytoplasmic vesicle. Its subcellular location is the secretory vesicle. It is found in the synaptic vesicle membrane. The protein resides in the neuronal dense core vesicle. Functionally, may serve as a scaffold protein for MADD and RAB3GA on synaptic vesicles. Plays a role in the brain as a key controller of neuronal and endocrine homeostatic processes. The chain is DmX-like protein 2 (DMXL2) from Homo sapiens (Human).